Reading from the N-terminus, the 286-residue chain is NAD kinase (286 aa).

Residue D74 is the Proton acceptor of the active site. Residues 74–75, 148–149, D178, A186, 189–194, and Q244 contribute to the NAD(+) site; these read DG, ND, and TAYNLS.

Belongs to the NAD kinase family. It depends on a divalent metal cation as a cofactor.

Its subcellular location is the cytoplasm. The enzyme catalyses NAD(+) + ATP = ADP + NADP(+) + H(+). In terms of biological role, involved in the regulation of the intracellular balance of NAD and NADP, and is a key enzyme in the biosynthesis of NADP. Catalyzes specifically the phosphorylation on 2'-hydroxyl of the adenosine moiety of NAD to yield NADP. The protein is NAD kinase of Campylobacter jejuni subsp. jejuni serotype O:6 (strain 81116 / NCTC 11828).